The sequence spans 375 residues: Aminomethyltransferase (375 aa).

It belongs to the GcvT family. As to quaternary structure, the glycine cleavage system is composed of four proteins: P, T, L and H.

It catalyses the reaction N(6)-[(R)-S(8)-aminomethyldihydrolipoyl]-L-lysyl-[protein] + (6S)-5,6,7,8-tetrahydrofolate = N(6)-[(R)-dihydrolipoyl]-L-lysyl-[protein] + (6R)-5,10-methylene-5,6,7,8-tetrahydrofolate + NH4(+). Functionally, the glycine cleavage system catalyzes the degradation of glycine. The sequence is that of Aminomethyltransferase from Symbiobacterium thermophilum (strain DSM 24528 / JCM 14929 / IAM 14863 / T).